A 172-amino-acid polypeptide reads, in one-letter code: Protein-export protein SecB (172 aa).

It belongs to the SecB family. As to quaternary structure, homotetramer, a dimer of dimers. One homotetramer interacts with 1 SecA dimer.

It is found in the cytoplasm. In terms of biological role, one of the proteins required for the normal export of preproteins out of the cell cytoplasm. It is a molecular chaperone that binds to a subset of precursor proteins, maintaining them in a translocation-competent state. It also specifically binds to its receptor SecA. This chain is Protein-export protein SecB, found in Xylella fastidiosa (strain 9a5c).